Here is a 364-residue protein sequence, read N- to C-terminus: Mannose-1-phosphate guanyltransferase (364 aa).

Belongs to the transferase hexapeptide repeat family.

It localises to the cytoplasm. The enzyme catalyses alpha-D-mannose 1-phosphate + GTP + H(+) = GDP-alpha-D-mannose + diphosphate. It participates in nucleotide-sugar biosynthesis; GDP-alpha-D-mannose biosynthesis; GDP-alpha-D-mannose from alpha-D-mannose 1-phosphate (GTP route): step 1/1. Involved in cell wall synthesis where it is required for glycosylation. Involved in cell cycle progression through cell-size checkpoint. The protein is Mannose-1-phosphate guanyltransferase (mpg1) of Aspergillus fumigatus (strain ATCC MYA-4609 / CBS 101355 / FGSC A1100 / Af293) (Neosartorya fumigata).